Reading from the N-terminus, the 639-residue chain is C-type lectin domain-containing protein 160 (639 aa).

The N-terminal stretch at 1-19 (MDLKSWILLSCTLLPLSVT) is a signal peptide. VWFA domains are found at residues 31-178 (DIII…VGIG) and 289-474 (DIIF…LCQV). Residues 491–618 (KYGECFFPTK…WNSVSCTSEY (128 aa)) form the C-type lectin domain. Cys594 and Cys614 are disulfide-bonded.

The protein localises to the secreted. The polypeptide is C-type lectin domain-containing protein 160 (clec-160) (Caenorhabditis elegans).